The sequence spans 92 residues: Small ribosomal subunit protein uS19 (92 aa).

This sequence belongs to the universal ribosomal protein uS19 family.

In terms of biological role, protein S19 forms a complex with S13 that binds strongly to the 16S ribosomal RNA. This chain is Small ribosomal subunit protein uS19, found in Bifidobacterium adolescentis (strain ATCC 15703 / DSM 20083 / NCTC 11814 / E194a).